We begin with the raw amino-acid sequence, 1334 residues long: Nck-associated protein 5-like (1334 aa).

5 disordered regions span residues 1–28 (MSEAMDQPAGGPGNPRPGEGDDGSMEPG), 115–146 (LPQIPLTPLQPPSEPPASPSLSSTEGPAAPLP), 210–234 (TPWRPPGQGPGSPEPINGELCGPPQ), 266–316 (GEED…SPDT), and 349–711 (PLNG…MVPS). Residues 1–139 (MSEAMDQPAG…PASPSLSSTE (139 aa)) are mediates interaction with CDK5RAP2 and is required for homodimerization and microtubule bundle formation. Positions 28-106 (GTCQELLHRL…NQMLSALFQQ (79 aa)) form a coiled coil. Residues 122–132 (PLQPPSEPPAS) show a composition bias toward pro residues. Polar residues predominate over residues 358 to 372 (GQSSSPDQAPPQLSK). Phosphoserine; by CDK1 occurs at positions 440, 451, 470, and 477. The span at 468–481 (SPSPGGPQLSPQLP) shows a compositional bias: low complexity. A (S/T)X(I/L)P motif 1 motif is present at residues 484–487 (SRIP). Phosphoserine is present on residues Ser-493, Ser-496, and Ser-498. The span at 519–547 (LPTSPSPCYTTPDSTQLRPPQSALSTTLS) shows a compositional bias: polar residues. 2 positions are modified to phosphoserine; by CDK1: Ser-571 and Ser-577. Residues 638 to 649 (PGNSSKKPSQGS) show a composition bias toward polar residues. Phosphothreonine is present on Thr-659. The interval 750 to 1146 (RVYSSHSMGA…SGTPSKNLPK (397 aa)) is mediates interaction with beta-tubulin and is required for microtubule bundle formation. Ser-767 bears the Phosphoserine; by CDK1 mark. Residues 782–884 (LAGALCPQVP…EGLAPHSAIE (103 aa)) form a disordered region. Over residues 810 to 825 (SPHSSPTKLPSKSPTK) the composition is skewed to low complexity. The short motif at 816–819 (TKLP) is the (S/T)X(I/L)P motif 2 element. Residues 926–929 (SKLP) carry the (S/T)X(I/L)P motif 3; required for interaction with MAPRE1 motif. 3 disordered regions span residues 931–953 (LNRRTEATKNKEGAGGGSPLRRE), 986–1015 (KAYLSSRARPRPGGPAPGPNTGLGQVQGQL), and 1030–1183 (LNRV…VPGI). Residues 933–942 (RRTEATKNKE) show a composition bias toward basic and acidic residues. Positions 956 to 994 (MEARKLEAESLNISKLMAKAEDLRRALEEEKAYLSSRAR) form a coiled coil. Residues 1033-1050 (VDGKELPSKSWREPKPEY) show a composition bias toward basic and acidic residues. Residues 1079–1090 (GCGKPPGKPSSE) show a composition bias toward low complexity. A compositionally biased stretch (polar residues) spans 1110-1122 (SHFTACGSLTRTL). Residues 1152–1167 (LDPPPGVPPARPPPLT) show a composition bias toward pro residues. Position 1194 is a phosphoserine (Ser-1194). Over residues 1197–1206 (AFPALLPAAP) the composition is skewed to low complexity. The tract at residues 1197–1334 (AFPALLPAAP…DSLSSCGSQG (138 aa)) is disordered. A compositionally biased stretch (polar residues) spans 1235 to 1247 (TFPNTRAAGSSSD). Over residues 1313-1334 (LETSESLSDSLYDSLSSCGSQG) the composition is skewed to low complexity.

Homodimer. Interacts with CDK5RAP2. Interacts with MAPRE1. Interacts with beta-tubulin. CDK1/Cyclin B-dependent phosphorylation mediates its dissociation from centrosomes during mitosis.

The protein resides in the cytoplasm. It is found in the cytoskeleton. The protein localises to the microtubule organizing center. It localises to the centrosome. Functionally, regulates microtubule organization and stabilization. Promotes microtubule growth and bundling formation and stabilizes microtubules by increasing intense acetylation of microtubules. Both tubulin-binding and homodimer formation are required for NCKAP5L-mediated microtubule bundle formation. This Homo sapiens (Human) protein is Nck-associated protein 5-like.